The following is a 113-amino-acid chain: Hydrogenase maturation factor HypA (113 aa).

H2 provides a ligand contact to Ni(2+). Zn(2+) contacts are provided by C73, C76, C89, and C92.

The protein belongs to the HypA/HybF family.

Its function is as follows. Involved in the maturation of [NiFe] hydrogenases. Required for nickel insertion into the metal center of the hydrogenase. This chain is Hydrogenase maturation factor HypA, found in Methylocella silvestris (strain DSM 15510 / CIP 108128 / LMG 27833 / NCIMB 13906 / BL2).